Consider the following 966-residue polypeptide: Next to BRCA1 gene 1 protein (966 aa).

In terms of domain architecture, PB1 spans 4-85; sequence QVTLNVTFKN…NQLQMQVHEG (82 aa). Position 116 is a phosphoserine (Ser116). The segment at 212 to 264 adopts a ZZ-type zinc-finger fold; it reads SWHIACNNCQRRIVGVRYQCSLCPSYNICEDCEAGPYGHDTNHVLLKLRRPVV. 8 residues coordinate Zn(2+): Cys217, Cys220, Cys231, Cys234, Cys240, Cys243, His250, and His254. The interval 542 to 636 is ATG8 family protein-binding; sequence ASERELYIPS…KRKAENIASV (95 aa). Thr586 is subject to Phosphothreonine; by GSK3-alpha. Phosphoserine is present on residues Ser590, Ser596, and Ser625. Positions 699–718 are enriched in acidic residues; the sequence is EAVMEEEEDEEDEEEEDELK. Disordered regions lie at residues 699-728, 750-792, and 848-879; these read EAVM…SSAS, MYSS…QPQE, and VPDQ…HHGS. Positions 727–738 are ATG8 family protein-binding; it reads ASSEDYIIILPE. In terms of domain architecture, UBA spans 913–957; sequence SEDQTAALMAHLFEMGFCDRQLNLRLLKKHNYNILQVVTELLQLN.

As to quaternary structure, homooligomer and heterooligomer. Interacts with TRIM55. Interacts with titin/TTN. Interacts with RNF29, USP8, MAP1LC3A, MAP1LC3B, MAP1LC3C, GABARAP, GABARAPL1 and GABARAPL2. Binds to ubiquitin and ubiquitinated proteins. Interacts with SQSTM1. Interacts with TAX1BP1. Interacts with IRF3; this interaction mediates autophagic degradation of IRF3. Interacts with IL12A and IL12B. In terms of assembly, (Microbial infection) Interacts with Influenza A virus protein PB1; this interaction promotes NBR1-mediated selective autophagic degradation of MAVS. In terms of processing, (Microbial infection) Cleaved by S.pyogenes SpeB protease; leading to its degradation. Degradation by SpeB prevents autophagy, promoting to S.pyogenes intracellular replication. Post-translationally, phosphorylated by GSK3A; this phosphorylation inhibits NBR1 involvement in the formation of ubiquitinated protein aggregates.

It is found in the cytoplasm. It localises to the cytoplasmic vesicle. Its subcellular location is the autophagosome. The protein resides in the lysosome. The protein localises to the myofibril. It is found in the sarcomere. It localises to the m line. Its function is as follows. Ubiquitin-binding autophagy adapter that participates in different processes including host defense or intracellular homeostasis. Possesses a double function during the selective autophagy by acting as a shuttle bringing ubiquitinated proteins to autophagosomes and also by participating in the formation of protein aggregates. Plays a role in the regulation of the innate immune response by modulating type I interferon production and targeting ubiquitinated IRF3 for autophagic degradation. In response to oxidative stress, promotes an increase in SQSTM1 levels, phosphorylation, and body formation by preventing its autophagic degradation. In turn, activates the KEAP1-NRF2/NFE2L2 antioxidant pathway. Also plays non-autophagy role by mediating the shuttle of IL-12 to late endosome for subsequent secretion. This chain is Next to BRCA1 gene 1 protein (NBR1), found in Homo sapiens (Human).